The sequence spans 614 residues: Sorting nexin-18 (614 aa).

Residues 1–61 (MALRARALYD…PASYVQVIRA (61 aa)) form the SH3 domain. The tract at residues 85-218 (GFEPLPAAPP…SQELGHGEPQ (134 aa)) is disordered. Residues 90–101 (PAAPPAAFPPLL) show a composition bias toward pro residues. Over residues 141–151 (SDDDWDDEWDD) the composition is skewed to acidic residues. In terms of domain architecture, PX spans 266–376 (FQCTIDDPTK…HFLTCPSSTD (111 aa)). Positions 302, 304, and 342 each coordinate a 1,2-diacyl-sn-glycero-3-phospho-(1D-myo-inositol-4,5-bisphosphate). Positions 411–614 (LQEVESKIDG…EEALHKYDSV (204 aa)) constitute a BAR domain.

It belongs to the sorting nexin family. As to quaternary structure, heterodimer with SNX9. Interacts with ITCH. Interacts with dynamin-2 (DNM2), SYNJ1 and WASL. Interacts with the AP-1 complex. Interacts with FCHSD1 (via the F-BAR domain).

The protein localises to the endomembrane system. Its subcellular location is the endosome membrane. The protein resides in the recycling endosome membrane. It is found in the cell membrane. It localises to the cytoplasmic vesicle membrane. Involved in endocytosis and intracellular vesicle trafficking, both during interphase and at the end of mitosis. Required for efficient progress through mitosis and cytokinesis. Required for normal formation of the cleavage furrow at the end of mitosis. Plays a role in endocytosis via clathrin-coated pits, but also clathrin-independent, actin-dependent fluid-phase endocytosis. Plays a role in macropinocytosis. Binds to membranes enriched in phosphatidylinositol 4,5-bisphosphate and promotes membrane tubulation. Stimulates the GTPase activity of DNM2. Promotes DNM2 location at the plasma membrane. Together with DNM2, involved in autophagosome assembly by regulating trafficking from recycling endosomes of phospholipid scramblase ATG9A. The protein is Sorting nexin-18 of Mus musculus (Mouse).